The following is a 142-amino-acid chain: Large ribosomal subunit protein uL13 (142 aa).

The protein belongs to the universal ribosomal protein uL13 family. As to quaternary structure, part of the 50S ribosomal subunit.

This protein is one of the early assembly proteins of the 50S ribosomal subunit, although it is not seen to bind rRNA by itself. It is important during the early stages of 50S assembly. This is Large ribosomal subunit protein uL13 from Cupriavidus necator (strain ATCC 17699 / DSM 428 / KCTC 22496 / NCIMB 10442 / H16 / Stanier 337) (Ralstonia eutropha).